Here is a 110-residue protein sequence, read N- to C-terminus: Nucleoid-associated protein Sfri_2406 (110 aa).

The protein belongs to the YbaB/EbfC family. In terms of assembly, homodimer.

The protein localises to the cytoplasm. It localises to the nucleoid. Functionally, binds to DNA and alters its conformation. May be involved in regulation of gene expression, nucleoid organization and DNA protection. The sequence is that of Nucleoid-associated protein Sfri_2406 from Shewanella frigidimarina (strain NCIMB 400).